Here is a 208-residue protein sequence, read N- to C-terminus: Thymidylate kinase (208 aa).

Residue 7–14 participates in ATP binding; the sequence is GIDGAGKT.

Belongs to the thymidylate kinase family.

The catalysed reaction is dTMP + ATP = dTDP + ADP. Its function is as follows. Phosphorylation of dTMP to form dTDP in both de novo and salvage pathways of dTTP synthesis. The protein is Thymidylate kinase of Xylella fastidiosa (strain Temecula1 / ATCC 700964).